Reading from the N-terminus, the 327-residue chain is Protoheme IX farnesyltransferase (327 aa).

The next 8 membrane-spanning stretches (helical) occupy residues 35–55 (LIPL…GWPL), 60–80 (LVCT…LNCL), 106–126 (SAFI…VSGV), 129–149 (LAAG…TALL), 157–177 (IVIG…AATG), 185–205 (WLFA…ALLL), 234–254 (GWIT…GGAF), and 283–303 (AKAL…LLIL).

This sequence belongs to the UbiA prenyltransferase family. Protoheme IX farnesyltransferase subfamily.

The protein resides in the cell inner membrane. It catalyses the reaction heme b + (2E,6E)-farnesyl diphosphate + H2O = Fe(II)-heme o + diphosphate. It functions in the pathway porphyrin-containing compound metabolism; heme O biosynthesis; heme O from protoheme: step 1/1. Converts heme B (protoheme IX) to heme O by substitution of the vinyl group on carbon 2 of heme B porphyrin ring with a hydroxyethyl farnesyl side group. This Synechococcus sp. (strain CC9605) protein is Protoheme IX farnesyltransferase.